The chain runs to 257 residues: Ig delta chain C region secreted form (257 aa).

Residues 5–105 (PDMFLLSECK…WDSQSSKRVT (101 aa)) form the Ig-like 1 domain. An intrachain disulfide couples Cys26 to Cys78. 2 N-linked (GlcNAc...) asparagine glycosylation sites follow: Asn58 and Asn75. Positions 89-111 (PFKFPESWDSQSSKRVTPTLQAK) are disordered. A compositionally biased stretch (polar residues) spans 96–111 (WDSQSSKRVTPTLQAK). Asn112, Asn135, and Asn227 each carry an N-linked (GlcNAc...) asparagine glycan. The region spanning 133 to 233 (PSNLTVNILT…TKLNASKSLA (101 aa)) is the Ig-like 2 domain.

Cell lines producing IgD contain several mRNA species for Ig delta chains. In plasmacytomas, the secreted form is the major component, and the membrane-bound form is a minor component. In spleen, however, the membrane-bound form is the major component. These two forms differ in their C-terminal segments.

Its subcellular location is the secreted. In Mus musculus (Mouse), this protein is Ig delta chain C region secreted form.